The sequence spans 368 residues: 2-aminoethylphosphonate--pyruvate transaminase (368 aa).

Lys-192 is modified (N6-(pyridoxal phosphate)lysine).

It belongs to the class-V pyridoxal-phosphate-dependent aminotransferase family. PhnW subfamily. In terms of assembly, homodimer. Requires pyridoxal 5'-phosphate as cofactor.

The enzyme catalyses (2-aminoethyl)phosphonate + pyruvate = phosphonoacetaldehyde + L-alanine. In terms of biological role, involved in phosphonate degradation. The polypeptide is 2-aminoethylphosphonate--pyruvate transaminase (Pseudomonas putida (strain W619)).